Reading from the N-terminus, the 307-residue chain is Ornithine carbamoyltransferase (307 aa).

Carbamoyl phosphate-binding positions include Ser-53–Thr-56, Gln-80, Arg-104, and His-131–Gln-134. L-ornithine is bound by residues Asn-162, Asp-219, and Ser-223–Met-224. Residues Cys-259–Leu-260 and Arg-287 each bind carbamoyl phosphate.

The protein belongs to the aspartate/ornithine carbamoyltransferase superfamily. OTCase family.

It localises to the cytoplasm. It catalyses the reaction carbamoyl phosphate + L-ornithine = L-citrulline + phosphate + H(+). It functions in the pathway amino-acid biosynthesis; L-arginine biosynthesis; L-arginine from L-ornithine and carbamoyl phosphate: step 1/3. Its function is as follows. Reversibly catalyzes the transfer of the carbamoyl group from carbamoyl phosphate (CP) to the N(epsilon) atom of ornithine (ORN) to produce L-citrulline. This chain is Ornithine carbamoyltransferase, found in Psychrobacter arcticus (strain DSM 17307 / VKM B-2377 / 273-4).